A 682-amino-acid polypeptide reads, in one-letter code: Penicillin-binding protein activator LpoA (682 aa).

Residues 1 to 26 form the signal peptide; the sequence is MLPLNSVRTHAGRLVPVMLAALFLAG. C27 carries N-palmitoyl cysteine lipidation. C27 carries the S-diacylglycerol cysteine lipid modification. Disordered regions lie at residues 240 to 262 and 314 to 341; these read AKQL…TGET and ANNA…VSPT. Residues 248-262 show a composition bias toward low complexity; it reads GGTPPAAAAPTTGET.

This sequence belongs to the LpoA family. Interacts with PBP1a.

The protein localises to the cell outer membrane. In terms of biological role, regulator of peptidoglycan synthesis that is essential for the function of penicillin-binding protein 1A (PBP1a). The sequence is that of Penicillin-binding protein activator LpoA from Dickeya chrysanthemi (strain Ech1591) (Dickeya zeae (strain Ech1591)).